Consider the following 267-residue polypeptide: Putative hydro-lyase Arth_3576 (267 aa).

It belongs to the D-glutamate cyclase family.

The chain is Putative hydro-lyase Arth_3576 from Arthrobacter sp. (strain FB24).